A 275-amino-acid polypeptide reads, in one-letter code: NH(3)-dependent NAD(+) synthetase (275 aa).

46–53 (GISGGQDS) contacts ATP. Asp-52 lines the Mg(2+) pocket. Arg-140 contacts deamido-NAD(+). Position 160 (Thr-160) interacts with ATP. Glu-165 is a Mg(2+) binding site. Lys-173 and Asp-180 together coordinate deamido-NAD(+). ATP contacts are provided by Lys-189 and Thr-211. 260 to 261 (HK) contacts deamido-NAD(+).

Belongs to the NAD synthetase family. Homodimer.

The enzyme catalyses deamido-NAD(+) + NH4(+) + ATP = AMP + diphosphate + NAD(+) + H(+). It functions in the pathway cofactor biosynthesis; NAD(+) biosynthesis; NAD(+) from deamido-NAD(+) (ammonia route): step 1/1. Its function is as follows. Catalyzes the ATP-dependent amidation of deamido-NAD to form NAD. Uses ammonia as a nitrogen source. This chain is NH(3)-dependent NAD(+) synthetase, found in Salmonella choleraesuis (strain SC-B67).